Consider the following 444-residue polypeptide: Tubulin beta-6 chain (444 aa).

Positions 11, 69, 138, 142, 143, 144, 204, and 226 each coordinate GTP. Residue Glu-69 participates in Mg(2+) binding.

This sequence belongs to the tubulin family. Dimer of alpha and beta chains. A typical microtubule is a hollow water-filled tube with an outer diameter of 25 nm and an inner diameter of 15 nM. Alpha-beta heterodimers associate head-to-tail to form protofilaments running lengthwise along the microtubule wall with the beta-tubulin subunit facing the microtubule plus end conferring a structural polarity. Microtubules usually have 13 protofilaments but different protofilament numbers can be found in some organisms and specialized cells. Mg(2+) serves as cofactor. As to expression, expressed in roots, leaf sheaths, anthers, and suspension cultured cells.

Its subcellular location is the cytoplasm. The protein resides in the cytoskeleton. Functionally, tubulin is the major constituent of microtubules, a cylinder consisting of laterally associated linear protofilaments composed of alpha- and beta-tubulin heterodimers. Microtubules grow by the addition of GTP-tubulin dimers to the microtubule end, where a stabilizing cap forms. Below the cap, tubulin dimers are in GDP-bound state, owing to GTPase activity of alpha-tubulin. In Oryza sativa subsp. japonica (Rice), this protein is Tubulin beta-6 chain (TUBB6).